Reading from the N-terminus, the 293-residue chain is Aromatic amino acid exporter YddG (293 aa).

At 1–6 the chain is on the cytoplasmic side; it reads MTSQKA. A helical transmembrane segment spans residues 7–27; sequence TLIGLVAIVLWSTMVGLIRGV. Residues 15-137 form the EamA 1 domain; it reads VLWSTMVGLI…IALTGVCWVL (123 aa). At 28–33 the chain is on the periplasmic side; that stretch reads SEGLGP. Residues 34–54 form a helical membrane-spanning segment; the sequence is VGGAAMIYSLSGLLLIFTVGL. The Cytoplasmic segment spans residues 55-63; the sequence is PDIRRFPGR. A helical transmembrane segment spans residues 64-84; the sequence is YLIAGSVLFVSYEICLALSLG. The Periplasmic segment spans residues 85 to 92; sequence YAATRHQA. Residues 93–113 traverse the membrane as a helical segment; the sequence is IEVGMVNYLWPSLTILFAILF. The Cytoplasmic segment spans residues 114–119; sequence NGQKTN. The helical transmembrane segment at 120–140 threads the bilayer; the sequence is WLIVPGLLIALTGVCWVLGGE. The Periplasmic segment spans residues 141–147; that stretch reads NGLNPGE. A helical transmembrane segment spans residues 148–168; that stretch reads IISNVATSPLSYLLAFLGAFI. The EamA 2 domain maps to 167 to 285; that stretch reads FIWATYCTVT…AVMVCVGSLL (119 aa). At 169-182 the chain is on the cytoplasmic side; the sequence is WATYCTVTNKYARG. The chain crosses the membrane as a helical span at residues 183-203; sequence FNGITVFVLLTAVALWLHYFL. At 204–207 the chain is on the periplasmic side; sequence TPQP. The helical transmembrane segment at 208–228 threads the bilayer; it reads AMIFSLPVIAKLFTAALTLGF. Residues 229–243 lie on the Cytoplasmic side of the membrane; that stretch reads AYAAWNVGILHGNVT. Residues 244–264 traverse the membrane as a helical segment; the sequence is IMAVGSYFTPVMSSALAALLL. Residues 265–267 are Periplasmic-facing; that stretch reads SSP. A helical membrane pass occupies residues 268–288; that stretch reads LSFSFWQGAVMVCVGSLLCWL. Residues 289-293 are Cytoplasmic-facing; that stretch reads ATRRR.

The protein belongs to the drug/metabolite transporter (DMT) superfamily. Aromatic amino acid/paraquat exporter (ArAA/P-E) (TC 2.A.7.17) family.

It localises to the cell inner membrane. In terms of biological role, amino acid transporter with broad substrate specificity. Required for resistance to methyl viologen. May function with OmpD porin. This Salmonella typhimurium (strain 14028s / SGSC 2262) protein is Aromatic amino acid exporter YddG (yddG).